We begin with the raw amino-acid sequence, 174 residues long: MEPWPLMAWGLMLTAITGWIKAVQSRDFTEKDIIFLHPSTTPYPGGFKCFTCEDAPDNYECNRWAPDLYCPRESRYCYTHHKMSWDGNTVSVTKRCVPLEDCLQTGCSDIDHEGNRVCTACCEGNICNLPLPRNETDAIFSTTSPINRSAQSTQTLPLLLLSVSITSLMLHSIN.

Positions 1 to 22 are cleaved as a signal peptide; that stretch reads MEPWPLMAWGLMLTAITGWIKA. The region spanning 47-141 is the UPAR/Ly6 domain; sequence FKCFTCEDAP…PRNETDAIFS (95 aa). 6 disulfide bridges follow: Cys49–Cys77, Cys52–Cys61, Cys70–Cys96, Cys102–Cys121, Cys107–Cys118, and Cys122–Cys127. Asn134 and Asn147 each carry an N-linked (GlcNAc...) asparagine glycan. Ser149 carries GPI-anchor amidated serine lipidation. Positions 150–174 are cleaved as a propeptide — removed in mature form; it reads AQSTQTLPLLLLSVSITSLMLHSIN.

Interacts with fzd8 and lrp6.

It is found in the cell membrane. Its subcellular location is the membrane raft. Its function is as follows. Acts as an important regulator of embryogenesis through its enhancement of Wnt/beta-catenin signaling. Positively regulates Wnt/beta-catenin signaling by ensuring phosphorylation of lrp6 specifically in plasma membrane rafts and its subsequent internalization into signaling-competent vesicles. Essential for the wnt8-mediated patterning of the mesoderm and neuroectoderm during gastrulation. This Danio rerio (Zebrafish) protein is Ly6/PLAUR domain-containing protein 6 (lypd6).